A 155-amino-acid polypeptide reads, in one-letter code: RNA pyrophosphohydrolase (155 aa).

The Nudix hydrolase domain maps to 5 to 147 (KYRPNVAAII…KRQVYRQVIA (143 aa)). Residues 42-63 (GGIDEGETPLEALHRELLEEIG) carry the Nudix box motif.

It belongs to the Nudix hydrolase family. RppH subfamily. A divalent metal cation is required as a cofactor.

Accelerates the degradation of transcripts by removing pyrophosphate from the 5'-end of triphosphorylated RNA, leading to a more labile monophosphorylated state that can stimulate subsequent ribonuclease cleavage. This chain is RNA pyrophosphohydrolase, found in Helicobacter pylori (strain ATCC 700392 / 26695) (Campylobacter pylori).